The sequence spans 146 residues: D-aminoacyl-tRNA deacylase (146 aa).

The short motif at 137–138 (GP) is the Gly-cisPro motif, important for rejection of L-amino acids element.

Belongs to the DTD family. In terms of assembly, homodimer.

The protein localises to the cytoplasm. It catalyses the reaction glycyl-tRNA(Ala) + H2O = tRNA(Ala) + glycine + H(+). The catalysed reaction is a D-aminoacyl-tRNA + H2O = a tRNA + a D-alpha-amino acid + H(+). An aminoacyl-tRNA editing enzyme that deacylates mischarged D-aminoacyl-tRNAs. Also deacylates mischarged glycyl-tRNA(Ala), protecting cells against glycine mischarging by AlaRS. Acts via tRNA-based rather than protein-based catalysis; rejects L-amino acids rather than detecting D-amino acids in the active site. By recycling D-aminoacyl-tRNA to D-amino acids and free tRNA molecules, this enzyme counteracts the toxicity associated with the formation of D-aminoacyl-tRNA entities in vivo and helps enforce protein L-homochirality. This chain is D-aminoacyl-tRNA deacylase, found in Bacillus mycoides (strain KBAB4) (Bacillus weihenstephanensis).